Consider the following 209-residue polypeptide: Imidazole glycerol phosphate synthase subunit HisH (209 aa).

Residues 5 to 209 enclose the Glutamine amidotransferase type-1 domain; sequence AIAIIDYDMG…LRNFVALVKD (205 aa). Cys83 acts as the Nucleophile in catalysis. Residues His188 and Glu190 contribute to the active site.

As to quaternary structure, heterodimer of HisH and HisF.

It is found in the cytoplasm. The catalysed reaction is 5-[(5-phospho-1-deoxy-D-ribulos-1-ylimino)methylamino]-1-(5-phospho-beta-D-ribosyl)imidazole-4-carboxamide + L-glutamine = D-erythro-1-(imidazol-4-yl)glycerol 3-phosphate + 5-amino-1-(5-phospho-beta-D-ribosyl)imidazole-4-carboxamide + L-glutamate + H(+). It catalyses the reaction L-glutamine + H2O = L-glutamate + NH4(+). It participates in amino-acid biosynthesis; L-histidine biosynthesis; L-histidine from 5-phospho-alpha-D-ribose 1-diphosphate: step 5/9. IGPS catalyzes the conversion of PRFAR and glutamine to IGP, AICAR and glutamate. The HisH subunit catalyzes the hydrolysis of glutamine to glutamate and ammonia as part of the synthesis of IGP and AICAR. The resulting ammonia molecule is channeled to the active site of HisF. This chain is Imidazole glycerol phosphate synthase subunit HisH, found in Thermosynechococcus vestitus (strain NIES-2133 / IAM M-273 / BP-1).